The primary structure comprises 663 residues: Alcohol oxidase (663 aa).

8–39 (DVIVCGGGSTGCVIAGRLANVDENLKVLLIEN) is a binding site for FAD. The active-site Proton acceptor is H567. A Microbody targeting signal motif is present at residues 661 to 663 (ARY).

This sequence belongs to the GMC oxidoreductase family. As to quaternary structure, homooctamer. It depends on FAD as a cofactor.

Its subcellular location is the peroxisome matrix. It catalyses the reaction a primary alcohol + O2 = an aldehyde + H2O2. The protein operates within energy metabolism; methane degradation. In terms of biological role, catalyzes the oxidation of methanol to formaldehyde and hydrogen peroxide, the first step in the methanol utilization pathway of methylotrophic yeasts. This chain is Alcohol oxidase (AOD1), found in Candida boidinii (Yeast).